Consider the following 536-residue polypeptide: DEAD-box ATP-dependent RNA helicase 26 (536 aa).

The segment at 1 to 44 is disordered; the sequence is MMSGGPSDATHRKRRRRRGPKGSGVDGPSIPRAVTTNGAGPEEE. A compositionally biased stretch (basic residues) spans 11–20; sequence HRKRRRRRGP. The Q motif motif lies at 74–102; the sequence is TRFDQCPVSPLSLKAIKDAGYEKMTQVQE. Residues 105–282 enclose the Helicase ATP-binding domain; it reads LPIILQGEDV…HIAMKRGYKF (178 aa). 118–125 contributes to the ATP binding site; it reads AKTGTGKT. The short motif at 230 to 233 is the DEAD box element; the sequence is DEAD. The Helicase C-terminal domain maps to 316 to 466; that stretch reads VLKKHIAEDA…SIQTGVKDAL (151 aa).

This sequence belongs to the DEAD box helicase family.

It catalyses the reaction ATP + H2O = ADP + phosphate + H(+). This is DEAD-box ATP-dependent RNA helicase 26 from Oryza sativa subsp. japonica (Rice).